Reading from the N-terminus, the 459-residue chain is UNC93-like protein 1 (459 aa).

The tract at residues 1 to 26 (MNVRDEGKTTAEKHGGGEENKSPENK) is disordered. The next 11 helical transmembrane spans lie at 38–58 (LMGF…GMGG), 73–93 (AVYT…NVLG), 96–116 (LTLA…LYYN), 122–142 (AFAI…WAGE), 159–179 (IALF…IPFI), 195–215 (YIAF…ILPA), 251–271 (LLIV…FNNV), 287–307 (FYWG…DFSF), 314–334 (GFTG…GGLA), 355–375 (GIEF…DAMY), and 425–445 (LIVN…LVYF).

The protein belongs to the unc-93 family.

The protein localises to the membrane. The chain is UNC93-like protein 1 from Arabidopsis thaliana (Mouse-ear cress).